We begin with the raw amino-acid sequence, 25 residues long: YKVDEDLQGAGGIQSRGYFFFRPRN.

Position 25 is an asparagine amide (N25).

Belongs to the NmU family.

It is found in the secreted. Functionally, stimulates uterine smooth muscle contraction and causes selective vasoconstriction. This is Neuromedin-U-25 (NMU) from Gallus gallus (Chicken).